The following is a 260-amino-acid chain: Isoprenyl transferase (260 aa).

D38 is an active-site residue. Mg(2+) is bound at residue D38. Substrate contacts are provided by residues G39 to R42, W43, R51, H55, and S83 to E85. Catalysis depends on N86, which acts as the Proton acceptor. Substrate-binding positions include W87, R89, R206, and R212 to S214. E225 contacts Mg(2+).

The protein belongs to the UPP synthase family. Homodimer. The cofactor is Mg(2+).

Its function is as follows. Catalyzes the condensation of isopentenyl diphosphate (IPP) with allylic pyrophosphates generating different type of terpenoids. The chain is Isoprenyl transferase from Heliobacterium mobile (Heliobacillus mobilis).